Reading from the N-terminus, the 193-residue chain is Ribonuclease HII (193 aa).

The 179-residue stretch at 15 to 193 folds into the RNase H type-2 domain; sequence YIVAGVDEAG…SYHRKSFKFC (179 aa). Residues Asp21, Glu22, and Asp112 each contribute to the a divalent metal cation site.

This sequence belongs to the RNase HII family. Mn(2+) serves as cofactor. The cofactor is Mg(2+).

It is found in the cytoplasm. The enzyme catalyses Endonucleolytic cleavage to 5'-phosphomonoester.. In terms of biological role, endonuclease that specifically degrades the RNA of RNA-DNA hybrids. The sequence is that of Ribonuclease HII from Rickettsia typhi (strain ATCC VR-144 / Wilmington).